Here is a 534-residue protein sequence, read N- to C-terminus: Bifunctional pantoate ligase/cytidylate kinase (534 aa).

Residues 1-302 (MRLLTTVAAL…LGSTRLIDNT (302 aa)) are pantoate--beta-alanine ligase. 48–55 (MGSLHQGH) serves as a coordination point for ATP. His55 serves as the catalytic Proton donor. Gln79 provides a ligand contact to (R)-pantoate. Gln79 contributes to the beta-alanine binding site. Residue 172–175 (GQKD) coordinates ATP. A (R)-pantoate-binding site is contributed by Gln178. ATP contacts are provided by residues Val201 and 209 to 212 (CSSR). Positions 303 to 534 (ILRDRQPIIA…DYYQQRLSQW (232 aa)) are cytidylate kinase.

The protein in the N-terminal section; belongs to the pantothenate synthetase family. In the C-terminal section; belongs to the cytidylate kinase family. Type 1 subfamily.

The protein localises to the cytoplasm. The enzyme catalyses (R)-pantoate + beta-alanine + ATP = (R)-pantothenate + AMP + diphosphate + H(+). It catalyses the reaction CMP + ATP = CDP + ADP. The catalysed reaction is dCMP + ATP = dCDP + ADP. It participates in cofactor biosynthesis; (R)-pantothenate biosynthesis; (R)-pantothenate from (R)-pantoate and beta-alanine: step 1/1. In terms of biological role, catalyzes the condensation of pantoate with beta-alanine in an ATP-dependent reaction via a pantoyl-adenylate intermediate. Catalyzes the transfer of a phosphate group from ATP to either CMP or dCMP to form CDP or dCDP and ADP, respectively. The chain is Bifunctional pantoate ligase/cytidylate kinase from Trichormus variabilis (strain ATCC 29413 / PCC 7937) (Anabaena variabilis).